Reading from the N-terminus, the 829-residue chain is Outer dense fiber protein 2 (829 aa).

Phosphoserine is present on residues S73 and S74. T92 carries the phosphothreonine modification. S95 is subject to Phosphoserine; by TSSK4. Phosphoserine occurs at positions 106 and 109. T110 is modified (phosphothreonine). S115 and S129 each carry phosphoserine. K138 is covalently cross-linked (Glycyl lysine isopeptide (Lys-Gly) (interchain with G-Cter in SUMO2)). S139 is modified (phosphoserine). A coiled-coil region spans residues 144-217 (QKGERQMAKR…MSKLVEAEMD (74 aa)). The residue at position 231 (T231) is a Phosphothreonine. Coiled coils occupy residues 245–423 (DINT…AEQL) and 461–798 (EIIV…NYVQ). S261 bears the Phosphoserine mark. A disordered region spans residues 392–413 (KQKGDRDKESLKKAIRAQKERA). The tract at residues 537–701 (KNYEGMIDNY…EAIHQSQLRL (165 aa)) is interaction with BBOF1. S632 carries the post-translational modification Phosphoserine.

The protein belongs to the ODF2 family. In terms of assembly, self-associates. Associates with microtubules and forms a fibrillar structure partially linked to the microtubule network. Interacts via its C-terminus with PLK1. Interacts with ODF1. Interacts with MARK4; the interaction is required for localization of ODF2 to centrioles. Interacts with TSSK4. Interacts with AKNA. Interacts with QRICH2. Interacts with CFAP58. Interacts with BBOF1. Interacts with CCDC38. Interacts with CCDC42. Tyrosine phosphorylated. Phosphorylated by TSSK4 on Ser-95. In terms of tissue distribution, testis-specific (at protein level). Highly expressed in cytoplasm of step 2 round spermatids. Detected in the middle piece and extends to about half the principal piece of the sperm tails.

It localises to the cytoplasm. Its subcellular location is the cytoskeleton. The protein localises to the microtubule organizing center. The protein resides in the centrosome. It is found in the cell projection. It localises to the cilium. Its subcellular location is the centriole. The protein localises to the spindle pole. The protein resides in the flagellum. Its function is as follows. Seems to be a major component of sperm tail outer dense fibers (ODF). ODFs are filamentous structures located on the outside of the axoneme in the midpiece and principal piece of the mammalian sperm tail and may help to maintain the passive elastic structures and elastic recoil of the sperm tail. May have a modulating influence on sperm motility. Functions as a general scaffold protein that is specifically localized at the distal/subdistal appendages of mother centrioles. Component of the centrosome matrix required for the localization of PLK1 and NIN to the centrosomes. Required for the formation and/or maintenance of normal CETN1 assembly. This chain is Outer dense fiber protein 2 (ODF2), found in Homo sapiens (Human).